The chain runs to 358 residues: uncharacterized protein (358 aa).

The interval 1-47 (MGNVAGETRANVIPLHTNRSRVAARRRAGQRAESRQHPSLLSDPNDR) is disordered. Over residues 18 to 29 (NRSRVAARRRAG) the composition is skewed to basic residues.

The protein to M.leprae ML2427.

This is an uncharacterized protein from Mycobacterium tuberculosis (strain CDC 1551 / Oshkosh).